We begin with the raw amino-acid sequence, 272 residues long: Shikimate dehydrogenase (NADP(+)) (272 aa).

Shikimate contacts are provided by residues 14–16 and threonine 61; that span reads SKS. The Proton acceptor role is filled by lysine 65. An NADP(+)-binding site is contributed by glutamate 77. Positions 86 and 102 each coordinate shikimate. NADP(+) is bound by residues 126–130, 149–154, and methionine 213; these read GAGGA and NRTASR. Tyrosine 215 serves as a coordination point for shikimate. Glycine 237 contacts NADP(+).

This sequence belongs to the shikimate dehydrogenase family. Homodimer.

It carries out the reaction shikimate + NADP(+) = 3-dehydroshikimate + NADPH + H(+). It functions in the pathway metabolic intermediate biosynthesis; chorismate biosynthesis; chorismate from D-erythrose 4-phosphate and phosphoenolpyruvate: step 4/7. Its function is as follows. Involved in the biosynthesis of the chorismate, which leads to the biosynthesis of aromatic amino acids. Catalyzes the reversible NADPH linked reduction of 3-dehydroshikimate (DHSA) to yield shikimate (SA). The chain is Shikimate dehydrogenase (NADP(+)) from Citrobacter koseri (strain ATCC BAA-895 / CDC 4225-83 / SGSC4696).